The primary structure comprises 243 residues: Probable transcriptional regulatory protein Smal_3128 (243 aa).

Belongs to the TACO1 family.

The protein localises to the cytoplasm. In Stenotrophomonas maltophilia (strain R551-3), this protein is Probable transcriptional regulatory protein Smal_3128.